A 190-amino-acid chain; its full sequence is Hypoxanthine/guanine phosphoribosyltransferase (190 aa).

This sequence belongs to the purine/pyrimidine phosphoribosyltransferase family. Archaeal HPRT subfamily. Homodimer.

It localises to the cytoplasm. It carries out the reaction IMP + diphosphate = hypoxanthine + 5-phospho-alpha-D-ribose 1-diphosphate. It catalyses the reaction GMP + diphosphate = guanine + 5-phospho-alpha-D-ribose 1-diphosphate. It functions in the pathway purine metabolism; IMP biosynthesis via salvage pathway; IMP from hypoxanthine: step 1/1. In terms of biological role, catalyzes a salvage reaction resulting in the formation of IMP that is energically less costly than de novo synthesis. This is Hypoxanthine/guanine phosphoribosyltransferase from Methanothrix thermoacetophila (strain DSM 6194 / JCM 14653 / NBRC 101360 / PT) (Methanosaeta thermophila).